The following is a 285-amino-acid chain: Homeobox protein vex1 (285 aa).

Disordered stretches follow at residues 30–54 (KSGNPDKESNISLPSRATGPTLPSV) and 69–88 (NEERSPPVKDQLHSQPAPQE). Basic and acidic residues predominate over residues 69–80 (NEERSPPVKDQL). Residues 131–190 (AARARTKFSPEQLEELERSFKENRYIGSSEKRRLSKVLKLSETQIKTWFQNRRMKFKRQT) constitute a DNA-binding region (homeobox).

In terms of tissue distribution, widely expressed in the embryo prior to gastrulation. Becomes restricted to the ventral marginal zone by mid/late gastrulation. Ventral localization persists during gastrulation and neurulation in the ventral region of the closed blastopore and in the proctodeum during tail bud stages.

The protein localises to the nucleus. Its function is as follows. Transcriptional repressor. Acts in a ventral signaling pathway downstream of bmp4 to antagonize the Spemann organizer and ventrally pattern the embryonic mesoderm. Represses transcription of the dorsal genes gsc and otx2. This chain is Homeobox protein vex1, found in Xenopus laevis (African clawed frog).